Consider the following 468-residue polypeptide: WD repeat-containing protein 55 homolog (468 aa).

Residues 1–107 form a disordered region; that stretch reads MRNFNSPKFG…VPKRVIDDYD (107 aa). 3 stretches are compositionally biased toward acidic residues: residues 15 to 26, 41 to 58, and 67 to 91; these read DDSDDDDFDSGT, PITE…EYNP, and SDDE…DGED. 6 WD repeats span residues 134–173, 178–217, 221–259, 262–301, 304–343, and 388–427; these read KTED…CTIV, THTK…LKRF, AHEE…PVFK, EVED…MYVQ, PYEE…YHCD, and QHSL…EFDD.

The protein belongs to the WD repeat WDR55 family.

This chain is WD repeat-containing protein 55 homolog, found in Aedes aegypti (Yellowfever mosquito).